We begin with the raw amino-acid sequence, 424 residues long: Enolase (424 aa).

Gln-162 is a (2R)-2-phosphoglycerate binding site. Glu-204 functions as the Proton donor in the catalytic mechanism. Positions 241, 284, and 311 each coordinate Mg(2+). 4 residues coordinate (2R)-2-phosphoglycerate: Lys-336, Arg-365, Ser-366, and Lys-387. Lys-336 acts as the Proton acceptor in catalysis.

The protein belongs to the enolase family. The cofactor is Mg(2+).

It is found in the cytoplasm. The protein localises to the secreted. Its subcellular location is the cell surface. It catalyses the reaction (2R)-2-phosphoglycerate = phosphoenolpyruvate + H2O. The protein operates within carbohydrate degradation; glycolysis; pyruvate from D-glyceraldehyde 3-phosphate: step 4/5. Catalyzes the reversible conversion of 2-phosphoglycerate (2-PG) into phosphoenolpyruvate (PEP). It is essential for the degradation of carbohydrates via glycolysis. The polypeptide is Enolase (Rhizobium meliloti (strain 1021) (Ensifer meliloti)).